A 421-amino-acid polypeptide reads, in one-letter code: Inner membrane transport protein YdiN (421 aa).

Over 1–9 the chain is Cytoplasmic; sequence MSQNKAFST. Residues 10 to 30 traverse the membrane as a helical segment; the sequence is PFILAVLCIYFSYFLHGISVI. At 31-49 the chain is on the periplasmic side; that stretch reads TLAQNMSSLAEKFSTDNAG. A helical transmembrane segment spans residues 50-70; that stretch reads IAYLISGIGLGRLISILFFGV. Residues 71–78 are Cytoplasmic-facing; sequence ISDKFGRR. Residues 79–99 form a helical membrane-spanning segment; it reads AVILMAVIMYLLFFFGIPACP. Residue N100 is a topological domain, periplasmic. Residues 101 to 121 traverse the membrane as a helical segment; the sequence is LTLAYGLAVCVGIANSALDTG. Topologically, residues 122–136 are cytoplasmic; sequence GYPALMECFPKASGS. A helical membrane pass occupies residues 137–157; sequence AVILVKAMVSFGQMFYPMLVS. Residues 158–163 are Periplasmic-facing; the sequence is YMLLNN. A helical membrane pass occupies residues 164–184; the sequence is IWYGYGLIIPGILFVLITLML. At 185–215 the chain is on the cytoplasmic side; it reads LKSKFPSQLVDASVTNELPQMNSKPLVWLEG. A helical transmembrane segment spans residues 216–236; sequence VSSVLFGVAAFSTFYVIVVWM. Over 237–251 the chain is Periplasmic; it reads PKYAMAFAGMSEAEA. The chain crosses the membrane as a helical span at residues 252–272; sequence LKTISYYSMGSLVCVFIFAAL. The Cytoplasmic segment spans residues 273 to 279; that stretch reads LKKMVRP. Residues 280-300 traverse the membrane as a helical segment; it reads IWANVFNSALATITAAIIYLY. Residues 301–308 lie on the Periplasmic side of the membrane; that stretch reads PSPLVCNA. Residues 309 to 329 form a helical membrane-spanning segment; sequence GAFVIGFSAAGGILQLGVSVM. Residues 330-342 are Cytoplasmic-facing; sequence SEFFPKSKAKVTS. Residues 343-363 form a helical membrane-spanning segment; the sequence is IYMMMGGLANFVIPLITGYLS. At 364–369 the chain is on the periplasmic side; sequence NIGLQY. A helical transmembrane segment spans residues 370-390; the sequence is IIVLDFTFALLALITAIIVFI. Topologically, residues 391–421 are cytoplasmic; that stretch reads RYYRVFIIPENDVRFGERKFCTRLNTIKHRG.

This sequence belongs to the major facilitator superfamily.

The protein localises to the cell inner membrane. This chain is Inner membrane transport protein YdiN (ydiN), found in Escherichia coli (strain K12).